The chain runs to 450 residues: 23S rRNA (uracil(1939)-C(5))-methyltransferase RlmD (450 aa).

One can recognise a TRAM domain in the interval 12-70 (SKQLSAKLSLNVDQLDHLGAGIAQYQGKVVFIPGALPDETVTVQLTEQKKNYARAKLIK). Residues Cys-83, Cys-89, Cys-92, and Cys-171 each coordinate [4Fe-4S] cluster. The S-adenosyl-L-methionine site is built by Gln-283, Phe-312, Asn-317, Glu-333, Asp-360, and Asp-380. Catalysis depends on Cys-406, which acts as the Nucleophile.

This sequence belongs to the class I-like SAM-binding methyltransferase superfamily. RNA M5U methyltransferase family. RlmD subfamily.

It catalyses the reaction uridine(1939) in 23S rRNA + S-adenosyl-L-methionine = 5-methyluridine(1939) in 23S rRNA + S-adenosyl-L-homocysteine + H(+). Catalyzes the formation of 5-methyl-uridine at position 1939 (m5U1939) in 23S rRNA. The polypeptide is 23S rRNA (uracil(1939)-C(5))-methyltransferase RlmD (Shewanella sp. (strain W3-18-1)).